The primary structure comprises 594 residues: MSGSFRSNFSIASIHLRLYETIKSQSRIILLFCRGMFKRFAKYKSNLESAMVDVELEARIQIPKPTNIIFEDETVITYYRSTMYPSLIFRRINNGKLNSKETVEKIKYGEVTICLSIEQTYSNMDIKFPIIPANKRTISRKRICENPIVDITKCGDQYTLEIEFDYSNYMHIEKILKEWKNPYWPPVKPMEISSSNLAKKLANNEQWCISPKADGIHVLVYSDGENQFIVHTNGYTEGDTNIKVNRIFEGELMSNGEILYFDCLMWENKNITKLDYIARYKYLENMNKKEIILFNNIYAIKKYLDKKHDFETDGYIITNIKNRKKVYKSKFKNTVDLRYKNGYLLLENEEFSERSPKNVNEQLEEDKIYEFDMEMNLIRERKDKTIANYKMPYDDNPIYKIAHSIGVPTLRYYHNKIKRELLSMLPKTTLLDIGSAKGGDITKWTNLKFEKVYAVDPNLELRQRSKKVVEIRENIEDVYKMFDYESVSLFFVPWNDKFMDVINKAKYFVLICMDKPVTVKEDCFECKIENEKVILKIPDTQTSEYVEENLIKYTDVFKKLKNWKHMKINRTMNTGSAQEIELSRMYSYHFFSKK.

Its function is as follows. The presence of the two linear plasmids, termed pGKL1 and pGKL2, in strains of Kluyveromyces lactis confers the killer phenotype to the host cell, by promoting the secretion of a toxin able to inhibit the growth of sensitive strains. This is an uncharacterized protein from Kluyveromyces lactis (strain ATCC 8585 / CBS 2359 / DSM 70799 / NBRC 1267 / NRRL Y-1140 / WM37) (Yeast).